Reading from the N-terminus, the 220-residue chain is Guanylate kinase (220 aa).

The 180-residue stretch at Gly-15 to Lys-194 folds into the Guanylate kinase-like domain. Ser-22–Ser-29 lines the ATP pocket.

The protein belongs to the guanylate kinase family.

The protein resides in the cytoplasm. The catalysed reaction is GMP + ATP = GDP + ADP. In terms of biological role, essential for recycling GMP and indirectly, cGMP. The protein is Guanylate kinase of Rhizobium johnstonii (strain DSM 114642 / LMG 32736 / 3841) (Rhizobium leguminosarum bv. viciae).